Here is a 529-residue protein sequence, read N- to C-terminus: Probable DNA helicase MPN_340 (529 aa).

Residues 2–285 enclose the UvrD-like helicase ATP-binding domain; it reads EHLNQEQKAA…FYTTQNYRSI (284 aa). ATP is bound at residue 23-30; sequence SGAGTGKT.

Belongs to the helicase family. UvrD subfamily.

The catalysed reaction is Couples ATP hydrolysis with the unwinding of duplex DNA by translocating in the 3'-5' direction.. It carries out the reaction ATP + H2O = ADP + phosphate + H(+). This chain is Probable DNA helicase MPN_340, found in Mycoplasma pneumoniae (strain ATCC 29342 / M129 / Subtype 1) (Mycoplasmoides pneumoniae).